The following is a 211-amino-acid chain: Urease accessory protein UreG (211 aa).

A GTP-binding site is contributed by 11–18; that stretch reads GPVGAGKT.

It belongs to the SIMIBI class G3E GTPase family. UreG subfamily. In terms of assembly, homodimer. UreD, UreF and UreG form a complex that acts as a GTP-hydrolysis-dependent molecular chaperone, activating the urease apoprotein by helping to assemble the nickel containing metallocenter of UreC. The UreE protein probably delivers the nickel.

The protein localises to the cytoplasm. Its function is as follows. Facilitates the functional incorporation of the urease nickel metallocenter. This process requires GTP hydrolysis, probably effectuated by UreG. This is Urease accessory protein UreG from Actinobacillus pleuropneumoniae serotype 3 (strain JL03).